A 355-amino-acid polypeptide reads, in one-letter code: Apyrase apy-1 (355 aa).

Residues 1–6 (MTQESN) lie on the Cytoplasmic side of the membrane. The chain crosses the membrane as a helical; Signal-anchor for type II membrane protein span at residues 7–29 (SNFFNFLLFGFVTAIAFYSGTQF). Asn-30 is a glycosylation site (N-linked (GlcNAc...) asparagine). The Lumenal portion of the chain corresponds to 30–355 (NKSSEQEEHI…PYKYEGIAFA (326 aa)). Positions 119, 166, and 235 each coordinate Ca(2+). Residue Asn-291 is glycosylated (N-linked (GlcNAc...) asparagine). Glu-350 provides a ligand contact to Ca(2+).

The protein belongs to the apyrase family. Ca(2+) serves as cofactor.

It is found in the endomembrane system. The enzyme catalyses a ribonucleoside 5'-diphosphate + H2O = a ribonucleoside 5'-phosphate + phosphate + H(+). Functionally, hydrolyzes UDP and to a lesser extent GDP. By preventing the accumulation of NDP, may promote the reglucosylation of incompletely folded glycoproteins in the endoplasmic reticulum following the unfolded protein response. The polypeptide is Apyrase apy-1 (Caenorhabditis elegans).